We begin with the raw amino-acid sequence, 206 residues long: Cytochrome c biogenesis ATP-binding export protein CcmA (206 aa).

One can recognise an ABC transporter domain in the interval 3–206 (VSVDDLCVTR…LAGASDEAFL (204 aa)). 35 to 42 (GPNGSGKT) serves as a coordination point for ATP.

This sequence belongs to the ABC transporter superfamily. CcmA exporter (TC 3.A.1.107) family. The complex is composed of two ATP-binding proteins (CcmA) and two transmembrane proteins (CcmB).

Its subcellular location is the cell inner membrane. The enzyme catalyses heme b(in) + ATP + H2O = heme b(out) + ADP + phosphate + H(+). Part of the ABC transporter complex CcmAB involved in the biogenesis of c-type cytochromes; once thought to export heme, this seems not to be the case, but its exact role is uncertain. Responsible for energy coupling to the transport system. In Roseobacter denitrificans (strain ATCC 33942 / OCh 114) (Erythrobacter sp. (strain OCh 114)), this protein is Cytochrome c biogenesis ATP-binding export protein CcmA.